A 476-amino-acid polypeptide reads, in one-letter code: MVRFESTDSLMLARQLPNKTVALILAGGRGSRLKDLTATRAKPAVHFGGKFRIIDFALSNCLNSGVRRIGVITQYQSHTLVQHIQRGWSFLNEEMNEFVDLLPAQQRLSTEQWYKGTADAVCQNLDIIRRYDAEYIVILAGDHIYKMDYSRMLLDHVEKGAECTVACIPVPISEGSEFGIMEVTADYQITAFYEKPANPPPIPGDPSNALASMGIYIFNADYLFKLLEEDNNTPGSSHDFGKDIIPQLTARKVVWAHPFDLSCVTSNAELPPYWRDVGTLDAYWRANLDLASVTPELDMYDRAWPIRTHMEPLPPAKFVQDRSGSHGMTMNSLVSGGCIVSGSVVVHSVLFPRVRVNSFCTIDSSLLLPDVHVGRSCRLRRCIIDRACHIPEGMVIGENADEDNARFYRSEGGGGVSDSGYAGKVRGKIEPLGFLFVRLDLLIRLSLLIRLNLFIRMNLLIILTLFFKLASIQASH.

Alpha-D-glucose 1-phosphate is bound by residues Y114, G179, 194–195, and S212; that span reads EK.

This sequence belongs to the bacterial/plant glucose-1-phosphate adenylyltransferase family. Homotetramer.

It catalyses the reaction alpha-D-glucose 1-phosphate + ATP + H(+) = ADP-alpha-D-glucose + diphosphate. The protein operates within glycan biosynthesis; glycogen biosynthesis. Functionally, involved in the biosynthesis of ADP-glucose, a building block required for the elongation reactions to produce glycogen. Catalyzes the reaction between ATP and alpha-D-glucose 1-phosphate (G1P) to produce pyrophosphate and ADP-Glc. This is Glucose-1-phosphate adenylyltransferase from Yersinia pestis bv. Antiqua (strain Antiqua).